Here is a 497-residue protein sequence, read N- to C-terminus: Aldehyde dehydrogenase (497 aa).

242–247 (GSTLVG) serves as a coordination point for NAD(+). Catalysis depends on Glu-265, which acts as the Proton acceptor. Residue Cys-299 is the Nucleophile of the active site.

The protein belongs to the aldehyde dehydrogenase family.

The enzyme catalyses an aldehyde + NAD(+) + H2O = a carboxylate + NADH + 2 H(+). The protein operates within alcohol metabolism; ethanol degradation; acetate from ethanol: step 2/2. The chain is Aldehyde dehydrogenase (aldA) from Aspergillus niger.